The following is a 67-amino-acid chain: Sec-independent protein translocase protein TatA (67 aa).

Residues 1–21 form a helical membrane-spanning segment; sequence MFGIGIQELLVVLVLVLLVFG. A disordered region spans residues 46–67; that stretch reads PDEIDITPGKKNGKTDKDDKQA. Positions 58 to 67 are enriched in basic and acidic residues; the sequence is GKTDKDDKQA.

This sequence belongs to the TatA/E family. In terms of assembly, the Tat system comprises two distinct complexes: a TatABC complex, containing multiple copies of TatA, TatB and TatC subunits, and a separate TatA complex, containing only TatA subunits. Substrates initially bind to the TatABC complex, which probably triggers association of the separate TatA complex to form the active translocon.

It localises to the cell inner membrane. Its function is as follows. Part of the twin-arginine translocation (Tat) system that transports large folded proteins containing a characteristic twin-arginine motif in their signal peptide across membranes. TatA could form the protein-conducting channel of the Tat system. The chain is Sec-independent protein translocase protein TatA from Nitratidesulfovibrio vulgaris (strain DSM 19637 / Miyazaki F) (Desulfovibrio vulgaris).